The primary structure comprises 534 residues: High affinity cGMP-specific 3',5'-cyclic phosphodiesterase 9A (534 aa).

The region spanning 175–496 is the PDEase domain; that stretch reads PRRDVPTYPK…EHYEELKQLD (322 aa). Residue H251 is the Proton donor of the active site. 251 to 255 is a binding site for 3',5'-cyclic GMP; the sequence is HNFRH. H255, H291, and D292 together coordinate Zn(2+). D292 serves as a coordination point for 3',5'-cyclic GMP. Residue D292 participates in Mg(2+) binding. Position 318 is a phosphoserine (S318). 3',5'-cyclic GMP-binding positions include D401, Y423, and 451–452; that span reads AQ. Zn(2+) is bound at residue D401. Positions 500–534 are disordered; sequence KELQKKTESLTSGAPENTTEKNRDAKDSEGHSPPN. Over residues 517 to 534 the composition is skewed to basic and acidic residues; the sequence is TTEKNRDAKDSEGHSPPN.

Belongs to the cyclic nucleotide phosphodiesterase family. PDE9 subfamily. As to quaternary structure, homodimer. Requires Zn(2+) as cofactor. The cofactor is Mg(2+). Highly expressed in kidney. Lower levels in liver, lung and brain. Widely expressed in brain, with highest expression in cerebellar Purkinje cells. Present in heart (at protein level).

It localises to the cell projection. The protein resides in the ruffle membrane. The protein localises to the cytoplasm. It is found in the perinuclear region. Its subcellular location is the golgi apparatus. It localises to the endoplasmic reticulum. The protein resides in the cell membrane. The protein localises to the sarcolemma. It catalyses the reaction 3',5'-cyclic GMP + H2O = GMP + H(+). It participates in purine metabolism; 3',5'-cyclic GMP degradation; GMP from 3',5'-cyclic GMP: step 1/1. Its activity is regulated as follows. Inhibited by SCH 51866 and moderately, by zaprinast. Specifically inhibited by PF-04447943 (6-[(3S,4S)-4-methyl-1-(pyrimidin-2-ylmethyl)pyrrolidin-3-yl]-1-(tetrahydro-2H-pyran-4-yl)-1,5-dihydro-4H-pyrazolo[3,4-d]pyrimidin-4-one). In terms of biological role, specifically hydrolyzes the second messenger cGMP, which is a key regulator of many important physiological processes. Highly specific: compared to other members of the cyclic nucleotide phosphodiesterase family, has the highest affinity and selectivity for cGMP. Specifically regulates natriuretic-peptide-dependent cGMP signaling in heart, acting as a regulator of cardiac hypertrophy in myocytes and muscle. Does not regulate nitric oxide-dependent cGMP in heart. Additional experiments are required to confirm whether its ability to hydrolyze natriuretic-peptide-dependent cGMP is specific to heart or is a general feature of the protein. In brain, involved in cognitive function, such as learning and long-term memory. The chain is High affinity cGMP-specific 3',5'-cyclic phosphodiesterase 9A (Pde9a) from Mus musculus (Mouse).